Consider the following 211-residue polypeptide: MNGVATTAALNLARHLQGAGITNAEVLAVVAKTPRELFLDAALGHKAYENTALPIGQGQTISQPYIVARMTELLLESRPKRVLEIGTGSGYQAAILAQLVDELCTVERIKSLQIQARQRLKRLDLHNVSFKYGDGWQGWANKGPFDAIMVTAAASSVPQALLQQLADGGVLVIPVGEETQQLMRVVRMGDQFHSQTIEMVKFVPLVNGELA.

Serine 62 is a catalytic residue.

This sequence belongs to the methyltransferase superfamily. L-isoaspartyl/D-aspartyl protein methyltransferase family.

It is found in the cytoplasm. The enzyme catalyses [protein]-L-isoaspartate + S-adenosyl-L-methionine = [protein]-L-isoaspartate alpha-methyl ester + S-adenosyl-L-homocysteine. Its function is as follows. Catalyzes the methyl esterification of L-isoaspartyl residues in peptides and proteins that result from spontaneous decomposition of normal L-aspartyl and L-asparaginyl residues. It plays a role in the repair and/or degradation of damaged proteins. In Shewanella loihica (strain ATCC BAA-1088 / PV-4), this protein is Protein-L-isoaspartate O-methyltransferase.